The sequence spans 1166 residues: Folliculin-interacting protein 1 (1166 aa).

The 442-residue stretch at 37–478 (FDPSQIRLIV…TVMPNGQPPI (442 aa)) folds into the uDENN FNIP1/2-type domain. 4 positions are modified to phosphoserine; by AMPK: Ser-220, Ser-230, Ser-232, and Ser-261. Residue Thr-294 is modified to Phosphothreonine. Ser-296 carries the phosphoserine modification. The cDENN FNIP1/2-type domain maps to 486-1092 (SSQSVDMLAK…VSNLLHSTLQ (607 aa)). A Phosphoserine; by AMPK modification is found at Ser-593. Position 594 is a phosphoserine (Ser-594). Cys-608 and Cys-610 together coordinate Zn(2+). The short motif at 608–615 (CNCKYCSH) is the Cys degron element. The KY-finger stretch occupies residues 611–612 (KY). Cys-613 and His-615 together coordinate Zn(2+). Residues Ser-760 and Ser-763 each carry the phosphoserine modification. 2 disordered regions span residues 781–817 (TKPL…VSEE) and 912–956 (LVPH…HDMT). 2 stretches are compositionally biased toward basic and acidic residues: residues 783–805 (PLKE…KDQS) and 915–925 (HGDKESSDKKI). The interaction with HSP90AA1 stretch occupies residues 929–1166 (TEWDIPRNES…HSPYVAQILL (238 aa)). The residue at position 938 (Ser-938) is a Phosphoserine; alternate; by CK2. The O-linked (GlcNAc) serine; alternate glycan is linked to Ser-938. Phosphoserine; by CK2 is present on residues Ser-939, Ser-941, Ser-946, and Ser-948. A dDENN FNIP1/2-type domain is found at 1102–1157 (FCVMHLEDRLQELYFKSKMLSEYLRGQMRVHVKELGVVLGIESSDLPLLAAVASTH). Lys-1119 is covalently cross-linked (Glycyl lysine isopeptide (Lys-Gly) (interchain with G-Cter in ubiquitin)).

Belongs to the FNIP family. Homodimer and homomultimer. Heterodimer and heteromultimer with FNIP2. Interacts with FLCN (via C-terminus). Component of the lysosomal folliculin complex (LFC), composed of FLCN, FNIP1 (or FNIP2), RagA/RRAGA or RagB/RRAGB GDP-bound, RagC/RRAGC or RagD/RRAGD GTP-bound, and Ragulator. Interacts with HSPCA and with the PRKAA1, PRKAB1 and PRKAG1 subunits of 5'-AMP-activated protein kinase (AMPK). Phosphorylated FLCN and AMPK are preferentially bound. Interacts with HSP70, STIP1, PTGES3, CDC37, BRAF, GCR and CDK4. Interacts with HSP90AA1; the interaction inhibits HSP90AA1 ATPase activity. Interacts with ATP2A2. Post-translationally, phosphorylated by AMPK in response to energetic stress. Phosphorylation by AMPK in response to mitochondrial damage promotes inactivation of the non-canonical mTORC1 signaling, nuclear translocation of TFEB and TFE3, inducing transcription of lysosomal or autophagy genes. Sequential phosphorylation by CK2 promotes its gradual interaction with HSP90AA1/Hsp90. Priming phosphorylation at Ser-938 is followed by relay phosphorylation at Ser-939, Ser-941, Ser-946 and Ser-948, promoting its gradual interaction with HSP90AA1/Hsp90. This leads to incremental inhibition of HSP90AA1/Hsp90 ATPase activity and gradual activation of both kinase and non-kinase clients. Dephosphorylated by protein phosphatase 5 (PP5), promoting glycosylation by OGT. In terms of processing, glcNAcylation at Ser-938 by OGT following dephosphorylation by protein phosphatase 5 (PP5) promotes ubiquitination and degradation by the proteasome. Ubiquitinated through 'Lys-11' linkage of ubiquitin moieties at Lys-1119 following glycosylation by OGT, leading to its degradation by the proteasome. Ubiquitinated by the CRL2(FEM1B) complex in response to reductive stress: reductive stress causes reduction of the conserved Cys degron in FNIP1, followed by zinc-binding, zinc acting as a molecular glue for recognition by the CRL2(FEM1B) complex. Ubiquitination leads to FNIP1 degradation, and activation of mitochondria to recalibrate reactive oxygen species (ROS). Post-translationally, oxidation of the Cys degron in normal conditions promotes its stabilization by preventing recognition and ubiquitination by the CRL2(FEM1B) complex. In terms of tissue distribution, strong expression is found in the heart, liver placenta, muscle, nasal mucosa, salivary gland and uvula and moderate expression in kidney and lung. Higher levels detected in clear cell renal cell carcinoma (RCC) and chromophobe RCC than in normal kidney tissue. Expressed in peripheral blood mononuclear cells.

It is found in the lysosome membrane. It localises to the cytoplasm. The protein localises to the cytosol. Binding partner of the GTPase-activating protein FLCN: involved in the cellular response to amino acid availability by regulating the non-canonical mTORC1 signaling cascade controlling the MiT/TFE factors TFEB and TFE3. Required to promote FLCN recruitment to lysosomes and interaction with Rag GTPases, leading to activation of the non-canonical mTORC1 signaling. In low-amino acid conditions, component of the lysosomal folliculin complex (LFC) on the membrane of lysosomes, which inhibits the GTPase-activating activity of FLCN, thereby inactivating mTORC1 and promoting nuclear translocation of TFEB and TFE3. Upon amino acid restimulation, disassembly of the LFC complex liberates the GTPase-activating activity of FLCN, leading to activation of mTORC1 and subsequent inactivation of TFEB and TFE3. Together with FLCN, regulates autophagy: following phosphorylation by ULK1, interacts with GABARAP and promotes autophagy. In addition to its role in mTORC1 signaling, also acts as a co-chaperone of HSP90AA1/Hsp90: following gradual phosphorylation by CK2, inhibits the ATPase activity of HSP90AA1/Hsp90, leading to activate both kinase and non-kinase client proteins of HSP90AA1/Hsp90. Acts as a scaffold to load client protein FLCN onto HSP90AA1/Hsp90. Competes with the activating co-chaperone AHSA1 for binding to HSP90AA1, thereby providing a reciprocal regulatory mechanism for chaperoning of client proteins. Also acts as a core component of the reductive stress response by inhibiting activation of mitochondria in normal conditions: in response to reductive stress, the conserved Cys degron is reduced, leading to recognition and polyubiquitylation by the CRL2(FEM1B) complex, followed by proteasomal. Required for B-cell development. The sequence is that of Folliculin-interacting protein 1 from Homo sapiens (Human).